A 125-amino-acid chain; its full sequence is Aldolase FrzH (125 aa).

It catalyses the reaction (2S)-3-(4-methoxyphenyl)-2-[(3S)-3-(methylamino)-8-oxo-1-azaspiro[4.5]decan-1-yl]propanal = (1S,3S,6S,7S,8R)-7-hydroxy-6-[(4-methoxyphenyl)methyl]-3-(methylamino)-5-azatricyclo[6.3.1.0(1,5)]dodecan-9-one. The protein operates within secondary metabolite biosynthesis. Functionally, aldolase; part of the gene cluster that mediates the biosynthesis of the alkaloid (-)-FR901483, a potent immunosuppressant that shows efficacy in animal models and a probable inhibitor of purine nucleotide biosynthesis by targeting phosphoribosylpyrophosphate amidotransferase (PPAT). Within the pathway, FrzH is a new kind of aldolase with no similarities to known aldolases, and which catalyzes the intramolecular aldol condensation via formation of a C9-C3' bond to yield an aza-tricyclic product. The biosynthesis of (-)-FR901483 starts with the condensation of two L-tyrosines to yield (S,S)-dityrosyl-piperazine. This process occurs in 3 steps with the non-canonical nonribosomal peptide synthetase FrzA catalyzing the reduction of L-tyrosine into L-tyrosinal, the spontaneous condensation of 2 L-tyrosinal units, and the subsequent reduction by the NmrA-like family domain-containing oxidoreductase FrzB. The cytochrome P450 monooxygenase FrzC then performs coupling between N10 and C1' to morph the piperazine into a 1,4-diazabicyclo[3.2.1]octane spiro-fused to a 2,5-cyclohexadienone. The dienone portion is further reduced to cyclohexanone by the flavin-dependent reductase FrzD. The methyltranserases (MTs) FrzE and FrzF are then involved in the methylation at the C10' amine and the C4 phenolic oxygen, respectively. The order of the two MTs appear to be interchangeable. Cleavage of the C9-N10' bond by the dioxygenase FrzG then leads to formation of a conjugated iminium. In addition to the oxidation of C9, an additional dehydrogenation between C7 and C8 can occur to give a likely shunt product. The next biosynthetic step is the intramolecular aldol condensation catalyzed by the newly identified aldolase FrzH to yield an aza-tricyclic product with the formation of a C9-C3' bond. The short-chain dehydrogenase/reductase FrzI then produces dephospho-(-)-FR901483 that is phosphorylated at C4'-OH into (-)-FR901483 by the phosphotransferase FrzJ. The polypeptide is Aldolase FrzH (Cladobotryum sp).